The primary structure comprises 433 residues: GTPase Der (433 aa).

EngA-type G domains lie at 3–167 (NIVA…QDTI) and 174–349 (PKIA…TNKT). Residues 9–16 (GRPNVGKS), 56–60 (DTGGY), 119–122 (NKAD), 180–187 (GRPNVGKS), 227–231 (DTAGI), and 292–295 (NKWD) contribute to the GTP site. One can recognise a KH-like domain in the interval 350-433 (QKISTAALNQ…VPVQLVFRKK (84 aa)).

Belongs to the TRAFAC class TrmE-Era-EngA-EngB-Septin-like GTPase superfamily. EngA (Der) GTPase family. In terms of assembly, associates with the 50S ribosomal subunit.

In terms of biological role, GTPase that plays an essential role in the late steps of ribosome biogenesis. The polypeptide is GTPase Der (Amoebophilus asiaticus (strain 5a2)).